The chain runs to 750 residues: Photosystem I P700 chlorophyll a apoprotein A1 (750 aa).

The next 8 membrane-spanning stretches (helical) occupy residues 70 to 93 (VFSAHFGQLSIIFLWLSGMYFHGA), 156 to 179 (LYCTAIGALVFAALMLFAGWFHYH), 195 to 219 (LNHHLAGLLGLGSLSWAGHQVHVSL), 291 to 309 (IAHHHLAIAILFLIAGHMY), 346 to 369 (WHAQLSLNLAMLGSLTIVVAHHMY), 385 to 411 (LSLFTHHMWIGGFLIVGAAAHAAIFMV), 433 to 455 (AIISHLNWACIFLGFHSFGLYIH), and 531 to 549 (FLVHHIHAFTIHVTVLILL). Residues Cys-573 and Cys-582 each contribute to the [4Fe-4S] cluster site. A run of 2 helical transmembrane segments spans residues 589 to 610 (HVFLGLFWMYNSISVVIFHFSW) and 664 to 686 (LSAYGLFFLGAHFVWAFSLMFLF). His-675 is a binding site for chlorophyll a'. Positions 683 and 691 each coordinate chlorophyll a. Trp-692 serves as a coordination point for phylloquinone. The helical transmembrane segment at 724-744 (AVGVTHYLLGGIATTWAFFLA) threads the bilayer.

Belongs to the PsaA/PsaB family. In terms of assembly, the PsaA/B heterodimer binds the P700 chlorophyll special pair and subsequent electron acceptors. PSI consists of a core antenna complex that captures photons, and an electron transfer chain that converts photonic excitation into a charge separation. The eukaryotic PSI reaction center is composed of at least 11 subunits. P700 is a chlorophyll a/chlorophyll a' dimer, A0 is one or more chlorophyll a, A1 is one or both phylloquinones and FX is a shared 4Fe-4S iron-sulfur center. is required as a cofactor.

The protein resides in the plastid. Its subcellular location is the chloroplast thylakoid membrane. The catalysed reaction is reduced [plastocyanin] + hnu + oxidized [2Fe-2S]-[ferredoxin] = oxidized [plastocyanin] + reduced [2Fe-2S]-[ferredoxin]. PsaA and PsaB bind P700, the primary electron donor of photosystem I (PSI), as well as the electron acceptors A0, A1 and FX. PSI is a plastocyanin-ferredoxin oxidoreductase, converting photonic excitation into a charge separation, which transfers an electron from the donor P700 chlorophyll pair to the spectroscopically characterized acceptors A0, A1, FX, FA and FB in turn. Oxidized P700 is reduced on the lumenal side of the thylakoid membrane by plastocyanin. This Jasminum nudiflorum (Winter jasmine) protein is Photosystem I P700 chlorophyll a apoprotein A1.